An 82-amino-acid chain; its full sequence is UPF0213 protein SERP0126 (82 aa).

The GIY-YIG domain maps to 2–77 (DKHFVYIVKC…KTYTRQQKLK (76 aa)).

It belongs to the UPF0213 family.

This chain is UPF0213 protein SERP0126, found in Staphylococcus epidermidis (strain ATCC 35984 / DSM 28319 / BCRC 17069 / CCUG 31568 / BM 3577 / RP62A).